A 210-amino-acid chain; its full sequence is Ion-translocating oxidoreductase complex subunit G (210 aa).

The chain crosses the membrane as a helical span at residues 9-29 (GVTLAVFAAITTGLTAVINAV). Threonine 175 carries the post-translational modification FMN phosphoryl threonine.

This sequence belongs to the RnfG family. As to quaternary structure, the complex is composed of six subunits: RnfA, RnfB, RnfC, RnfD, RnfE and RnfG. It depends on FMN as a cofactor.

It is found in the cell inner membrane. In terms of biological role, part of a membrane-bound complex that couples electron transfer with translocation of ions across the membrane. In Erwinia tasmaniensis (strain DSM 17950 / CFBP 7177 / CIP 109463 / NCPPB 4357 / Et1/99), this protein is Ion-translocating oxidoreductase complex subunit G.